The primary structure comprises 334 residues: Large ribosomal subunit protein uL3 (334 aa).

Residues 1 to 10 show a composition bias toward basic residues; that stretch reads MGMKKSRPRR. The tract at residues 1-20 is disordered; that stretch reads MGMKKSRPRRGSLAFSPRKR.

Belongs to the universal ribosomal protein uL3 family. In terms of assembly, part of the 50S ribosomal subunit. Forms a cluster with proteins L14 and L24e.

Its function is as follows. One of the primary rRNA binding proteins, it binds directly near the 3'-end of the 23S rRNA, where it nucleates assembly of the 50S subunit. The polypeptide is Large ribosomal subunit protein uL3 (Methanococcus maripaludis (strain C6 / ATCC BAA-1332)).